Here is a 274-residue protein sequence, read N- to C-terminus: Large ribosomal subunit protein uL2cz/uL2cy (274 aa).

A disordered region spans residues 224–274; the sequence is NPVDHPHGGGEGRAPIGRKKPATPWGYPALGRRSRKRNKYSDNLILRRRSK.

Belongs to the universal ribosomal protein uL2 family. Part of the 50S ribosomal subunit.

The protein resides in the plastid. The protein localises to the chloroplast. The protein is Large ribosomal subunit protein uL2cz/uL2cy (rpl2-A) of Carica papaya (Papaya).